The primary structure comprises 548 residues: Membrane protein insertase YidC (548 aa).

A helical membrane pass occupies residues 6-26; sequence NLLVIALLFVSFMIWQAWEQD. Residues 28 to 55 are disordered; that stretch reads NPQPQAQQTTQTTTTAAGSAADQGVPAS. The span at 30–50 shows a compositional bias: low complexity; the sequence is QPQAQQTTQTTTTAAGSAADQ. A run of 4 helical transmembrane segments spans residues 350 to 370, 420 to 440, 458 to 478, and 499 to 519; these read FVGN…GIMY, LGGC…YYML, LSAQ…MFFI, and PVIF…YYIV.

The protein belongs to the OXA1/ALB3/YidC family. Type 1 subfamily. Interacts with the Sec translocase complex via SecD. Specifically interacts with transmembrane segments of nascent integral membrane proteins during membrane integration.

The protein resides in the cell inner membrane. Required for the insertion and/or proper folding and/or complex formation of integral membrane proteins into the membrane. Involved in integration of membrane proteins that insert both dependently and independently of the Sec translocase complex, as well as at least some lipoproteins. Aids folding of multispanning membrane proteins. In Escherichia coli O127:H6 (strain E2348/69 / EPEC), this protein is Membrane protein insertase YidC.